The primary structure comprises 1647 residues: MVQKKKFCPRLLDYLVIVGARHPSSDSVAQTPELLRRYPLEDHTEFPLPPDVVFFCQPEGCLSVRQRRMSLRDDTSFVFTLTDKDTGVTRYGICVNFYRSFQKRISKEKGEGGAGSRGKEGTHATCASEEGGTESSESGSSLQPLSADSTPDVNQSPRGKRRAKAGSRSRNSTLTSLCVLSHYPFFSTFRECLYTLKRLVDCCSERLLGKKLGIPRGVQRDTMWRIFTGSLLVEEKSSALLHDLREIEAWIYRLLRSPVPVSGQKRVDIEVLPQELQPALTFALPDPSRFTLVDFPLHLPLELLGVDACLQVLTCILLEHKVVLQSRDYNALSMSVMAFVAMIYPLEYMFPVIPLLPTCMASAEQLLLAPTPYIIGVPASFFLYKLDFKMPDDVWLVDLDSNRVIAPTNAEVLPILPEPESLELKKHLKQALASMSLNTQPILNLEKFHEGQEIPLLLGRPSNDLQSTPSTEFNPLIYGNDVDSVDVATRVAMVRFFNSANVLQGFQMHTRTLRLFPRPVVAFQAGSFLASRPRQTPFAEKLARTQAVEYFGEWILNPTNYAFQRIHNNMFDPALIGDKPKWYAHQLQPIHYRVYDSNSQLAEALSVPPERDSDSEPTDDSGSDSMDYDDSSSSYSSLGDFVSEMMKCDINGDTPNVDPLTHAALGDASEVEIDELQNQKEAEEPGPDSENSQENPPLRSSSSTTASSSPSTVIHGANSEPADSTEMDDKAAVGVSKPLPSVPPSIGKSNVDRRQAEIGEGSVRRRIYDNPYFEPQYGFPPEEDEDEQGESYTPRFSQHVSGNRAQKLLRPNSLRLASDSDAESDSRASSPNSTVSNTSTEGFGGIMSFASSLYRNHSTSFSLSNLTLPTKGAREKATPFPSLKVFGLNTLMEIVTEAGPGSGEGNRRALVDQKSSVIKHSPTVKREPPSPQGRSSNSSENQQFLKEVVHSVLDGQGVGWLNMKKVRRLLESEQLRVFVLSKLNRMVQSEDDARQDIIPDVEISRKVYKGMLDLLKCTVLSLEQSYAHAGLGGMASIFGLLEIAQTHYYSKEPDKRKRSPTESVNTPVGKDPGLAGRGDPKAMAQLRVPQLGPRAPSATGKGPKELDTRSLKEENFIASIELWNKHQEVKKQKALEKQRPEVIKPVFDLGETEEKKSQISADSGVSLTSSSQRTDQDSVIGVSPAVMIRSSSQDSEVSTVVSNSSGETLGADSDLSSNAGDGPGGEGSVHLASSRGTLSDSEIETNSATSTIFGKAHSLKPSIKEKLAGSPIRTSEDVSQRVYLYEGLLGRDKGSMWDQLEDAAMETFSISKERSTLWDQMQFWEDAFLDAVMLEREGMGMDQGPQEMIDRYLSLGEHDRKRLEDDEDRLLATLLHNLISYMLLMKVNKNDIRKKVRRLMGKSHIGLVYSQQINEVLDQLANLNGRDLSIWSSGSRHMKKQTFVVHAGTDTNGDIFFMEVCDDCVVLRSNIGTVYERWWYEKLINMTYCPKTKVLCLWRRNGSETQLNKFYTKKCRELYYCVKDSMERAAARQQSIKPGPELGGEFPVQDLKTGEGGLLQVTLEGINLKFMHNQVFIELNHIKKCNTVRGVFVLEEFVPEIKEVVSHKYKTPMAHEICYSVLCLFSYVAAVHSSEEDLRTPPRPVSS.

The 255-residue stretch at 14 to 268 (YLVIVGARHP…VPVSGQKRVD (255 aa)) folds into the uDENN domain. Residues 108–122 (EKGEGGAGSRGKEGT) are compositionally biased toward basic and acidic residues. The interval 108-168 (EKGEGGAGSR…GKRRAKAGSR (61 aa)) is disordered. Positions 128–141 (SEEGGTESSESGSS) are enriched in low complexity. The span at 142–157 (LQPLSADSTPDVNQSP) shows a compositional bias: polar residues. Ser-156 carries the post-translational modification Phosphoserine. Basic residues predominate over residues 158–167 (RGKRRAKAGS). The cDENN domain maps to 289 to 429 (RFTLVDFPLH…ESLELKKHLK (141 aa)). The region spanning 431-565 (ALASMSLNTQ…LNPTNYAFQR (135 aa)) is the dDENN domain. 2 disordered regions span residues 604-636 (ALSV…SSYS) and 678-842 (NQKE…STEG). Residues 615–630 (SEPTDDSGSDSMDYDD) show a composition bias toward acidic residues. 2 positions are modified to phosphoserine: Ser-689 and Ser-692. Polar residues predominate over residues 689-699 (SENSQENPPLR). A compositionally biased stretch (low complexity) spans 700–712 (SSSSTTASSSPST). The span at 750 to 768 (NVDRRQAEIGEGSVRRRIY) shows a compositional bias: basic and acidic residues. Polar residues predominate over residues 790 to 804 (ESYTPRFSQHVSGNR). 3 positions are modified to phosphoserine: Ser-813, Ser-818, and Ser-820. Low complexity predominate over residues 827–840 (RASSPNSTVSNTST). Phosphoserine is present on residues Ser-858, Ser-862, Ser-916, Ser-921, and Ser-930. Disordered stretches follow at residues 913 to 941 (QKSS…SSEN), 1051 to 1110 (KEPD…DTRS), and 1146 to 1243 (VFDL…DSEI). Residues 932-941 (QGRSSNSSEN) are compositionally biased toward polar residues. Ser-1059 is modified (phosphoserine). Phosphothreonine is present on residues Thr-1061 and Thr-1066. Residue Ser-1110 is modified to Phosphoserine. Composition is skewed to polar residues over residues 1158–1173 (QISA…SSQR), 1189–1207 (RSSS…SSGE), and 1234–1243 (SRGTLSDSEI). A Phosphothreonine modification is found at Thr-1237. A phosphoserine mark is found at Ser-1239 and Ser-1270. The Death domain maps to 1340–1415 (GMDQGPQEMI…GLVYSQQINE (76 aa)).

This sequence belongs to the MADD family. In terms of assembly, interacts (via death domain) with TNFRSF1A (via death domain). Interacts with PIDD1. Interacts with YWHAZ. Interacts (via death domain) with KIF1B; links the motor KIF1B to Rab3-carrying vesicles in anterograde synaptic vesicle transport. Interacts with KIF1A. Interacts (via uDENN domain) with RAB3A, RAB3B, RAB3C and RAB3D; the GTP-bound form of the Rab proteins is preferred for interaction. As to expression, expressed in testis, ovary, brain and heart. Expressed in spleen, thymus, prostate, testis, ovary, small instestine and colon. Expressed in liver. In terms of tissue distribution, not detected in the brain, breast, kidney, lung, ovary, pancreas, testis, uterus, stomach and thyroid. Expressed in the brain, breast, kidney, lung, ovary, pancreas, testis, uterus, stomach and thyroid.

It is found in the cell membrane. The protein resides in the cytoplasm. The protein localises to the cell projection. It localises to the axon. In terms of biological role, guanyl-nucleotide exchange factor that regulates small GTPases of the Rab family. Converts GDP-bound inactive form of RAB27A and RAB27B to the GTP-bound active forms. Converts GDP-bound inactive form of RAB3A, RAB3C and RAB3D to the GTP-bound active forms, GTPases involved in synaptic vesicle exocytosis and vesicle secretion. Plays a role in synaptic vesicle formation and in vesicle trafficking at the neuromuscular junction. Involved in up-regulating a post-docking step of synaptic exocytosis in central synapses. Probably by binding to the motor proteins KIF1B and KIF1A, mediates motor-dependent transport of GTP-RAB3A-positive vesicles to the presynaptic nerve terminals. Plays a role in TNFA-mediated activation of the MAPK pathway, including ERK1/2. May link TNFRSF1A with MAP kinase activation. May be involved in the regulation of TNFA-induced apoptosis. This chain is MAP kinase-activating death domain protein, found in Homo sapiens (Human).